Reading from the N-terminus, the 537-residue chain is Biotin carboxylase, chloroplastic (537 aa).

A chloroplast-targeting transit peptide spans 1–71; it reads MDASMITNSK…ATSGGLGVTC (71 aa). ATP-binding positions include Lys188, Lys230, 236-237, 272-275, and His280; these read GG and EKFV. The ATP-grasp domain occupies 192–389; it reads RETMKNAGVP…LIEEQIRVAM (198 aa). Lys309 is a binding site for hydrogencarbonate. 2 residues coordinate ATP: Glu347 and Glu360. Positions 347, 360, and 362 each coordinate Mg(2+). The Mn(2+) site is built by Glu347, Glu360, and Asn362. Hydrogencarbonate contacts are provided by Arg364, Val367, and Arg410. Residue Arg364 is part of the active site. Arg410 lines the biotin pocket.

As to quaternary structure, acetyl-CoA carboxylase is a heterohexamer composed of biotin carboxyl carrier protein, biotin carboxylase and two subunits each of ACCase subunit alpha and ACCase plastid-coded subunit beta (accD). The cofactor is Mg(2+). Requires Mn(2+) as cofactor. Accumulates in fatty acids synthesizing tissues. Mostly expressed in siliques, developing leaves, and flowers, present in roots and embryos (especially at torpedo stage), and, to a lower extent, in mature leaves.

Its subcellular location is the plastid. The protein localises to the chloroplast. It catalyses the reaction N(6)-biotinyl-L-lysyl-[protein] + hydrogencarbonate + ATP = N(6)-carboxybiotinyl-L-lysyl-[protein] + ADP + phosphate + H(+). Its pathway is lipid metabolism; malonyl-CoA biosynthesis; malonyl-CoA from acetyl-CoA: step 1/1. Functionally, this protein is a component of the acetyl coenzyme A carboxylase complex; first, biotin carboxylase catalyzes the carboxylation of the carrier protein and then the transcarboxylase transfers the carboxyl group to form malonyl-CoA. This is Biotin carboxylase, chloroplastic (CAC2) from Arabidopsis thaliana (Mouse-ear cress).